The chain runs to 427 residues: Histidine--tRNA ligase (427 aa).

The protein belongs to the class-II aminoacyl-tRNA synthetase family. As to quaternary structure, homodimer.

The protein localises to the cytoplasm. It catalyses the reaction tRNA(His) + L-histidine + ATP = L-histidyl-tRNA(His) + AMP + diphosphate + H(+). The protein is Histidine--tRNA ligase (hisS) of Mycobacterium leprae (strain TN).